A 299-amino-acid chain; its full sequence is Phosphoribosylaminoimidazole-succinocarboxamide synthase (299 aa).

Belongs to the SAICAR synthetase family.

The enzyme catalyses 5-amino-1-(5-phospho-D-ribosyl)imidazole-4-carboxylate + L-aspartate + ATP = (2S)-2-[5-amino-1-(5-phospho-beta-D-ribosyl)imidazole-4-carboxamido]succinate + ADP + phosphate + 2 H(+). Its pathway is purine metabolism; IMP biosynthesis via de novo pathway; 5-amino-1-(5-phospho-D-ribosyl)imidazole-4-carboxamide from 5-amino-1-(5-phospho-D-ribosyl)imidazole-4-carboxylate: step 1/2. The polypeptide is Phosphoribosylaminoimidazole-succinocarboxamide synthase (Streptomyces coelicolor (strain ATCC BAA-471 / A3(2) / M145)).